The sequence spans 172 residues: Counting factor-associated protein B (172 aa).

Positions 1 to 21 (MKLLNSLILLVLTCLVSSINT) are cleaved as a signal peptide. Residues asparagine 37 and asparagine 153 are each glycosylated (N-linked (GlcNAc...) asparagine).

The protein resides in the secreted. This Dictyostelium discoideum (Social amoeba) protein is Counting factor-associated protein B (cfaB).